The chain runs to 385 residues: GTP cyclohydrolase-2 (385 aa).

The DHBP synthase-like stretch occupies residues 1-189 (MYADAPSDSA…RDIADYRVHV (189 aa)). The segment at 190 to 385 (VRTLRRVAEA…TKAERSGHMF (196 aa)) is GTP cyclohydrolase II. 240–244 (RLHSE) lines the GTP pocket. Zn(2+) is bound by residues C245, C256, and C258. Residues Q261, 283 to 285 (EGR), and T305 contribute to the GTP site. D317 acts as the Proton acceptor in catalysis. R319 (nucleophile) is an active-site residue. T340 and K345 together coordinate GTP.

This sequence in the N-terminal section; belongs to the DHBP synthase family. It in the C-terminal section; belongs to the GTP cyclohydrolase II family. The cofactor is Zn(2+).

It catalyses the reaction GTP + 4 H2O = 2,5-diamino-6-hydroxy-4-(5-phosphoribosylamino)-pyrimidine + formate + 2 phosphate + 3 H(+). Its pathway is cofactor biosynthesis; riboflavin biosynthesis; 5-amino-6-(D-ribitylamino)uracil from GTP: step 1/4. Its function is as follows. Catalyzes the conversion of GTP to 2,5-diamino-6-ribosylamino-4(3H)-pyrimidinone 5'-phosphate (DARP), formate and pyrophosphate. The polypeptide is GTP cyclohydrolase-2 (ribA) (Azospirillum brasilense).